Consider the following 602-residue polypeptide: Protein nessun dorma (602 aa).

Positions 188–208 (AEAKYIQQRLDYLELDLSDAE) form a coiled coil.

Interacts (via N-terminus) with both members of the centralspindlin complex, Pav and Tum. As to expression, detected in testis (at protein level). Also expressed in ovary.

The protein localises to the midbody. Required during male meiosis for completion of spermatocyte cytokinesis and possibly also required in female germline cells. Also involved in ring canal formation in male and female germline cells. Not essential for cleavage furrow ingression but is required for contractile ring stability and the attachment of the furrowing membrane to the actomyosin ring in late telophase. Displays high binding affinity for beta-galactosides. This chain is Protein nessun dorma, found in Drosophila melanogaster (Fruit fly).